We begin with the raw amino-acid sequence, 466 residues long: Dynein axonemal assembly factor 11 (466 aa).

LRR repeat units lie at residues 22–43 (SLEELSLHQQEIERLEHIDKWC), 45–66 (DLKILYLQNNLIGKIENVSKLK), 67–88 (KLEYLNLALNNIEKIENLEGCE), and 89–110 (ELAKLDLTVNFIGELSSIKNLQ). One can recognise an LRRCT domain in the interval 123-161 (NPCASFDHYREFVVATLPQLKWLDGKEIEPSERIKALQD). The stretch at 178–204 (LKRAKLKEEAQRKHQEEDKNEDKRSNA) forms a coiled coil. Residues 185 to 202 (EEAQRKHQEEDKNEDKRS) show a composition bias toward basic and acidic residues. 3 disordered regions span residues 185–206 (EEAQRKHQEEDKNEDKRSNAGF), 268–288 (MEKQRKKQEKLSEKKKKVKPP), and 391–466 (AFKS…PPLI). Basic residues predominate over residues 269–287 (EKQRKKQEKLSEKKKKVKP). One can recognise a CS domain in the interval 301–396 (VNEPKIDFSL…GGQRAFKSMK (96 aa)). 2 stretches are compositionally biased toward basic and acidic residues: residues 398 to 425 (TSDRSREQTNTRSKHMEKLEVDPSKHSF) and 433 to 445 (QEKKHTPRRRPEP). Over residues 450-460 (SEEDPTFEDNP) the composition is skewed to acidic residues.

Belongs to the tilB family. Interacts (via CS domain) with ZMYND10 (via C-terminus). As to expression, expressed predominantly in testis and in nasal epithelial cells.

The protein resides in the cytoplasm. The protein localises to the cell projection. It is found in the cilium. Its subcellular location is the dynein axonemal particle. It localises to the flagellum. In terms of biological role, involved in dynein arm assembly, is important for expression and transporting outer dynein arm (ODA) proteins from the cytoplasm to the cilia. Acts as a crucial component in the formation and motility of spermatozoal flagella. In Homo sapiens (Human), this protein is Dynein axonemal assembly factor 11.